Here is a 726-residue protein sequence, read N- to C-terminus: Catalase-peroxidase (726 aa).

The disordered stretch occupies residues 1–33; the sequence is MSTSDDIHNTTATGKCPFHQGGHDQSAGAGTTT. The segment at residues 105 to 226 is a cross-link (tryptophyl-tyrosyl-methioninium (Trp-Tyr) (with M-252)); sequence WHGAGTYRSI…LGATEMGLIY (122 aa). Residue histidine 106 is the Proton acceptor of the active site. The segment at residues 226–252 is a cross-link (tryptophyl-tyrosyl-methioninium (Tyr-Met) (with W-105)); it reads YVNPEGPDHSGEPLSAAAAIRATFGNM. Histidine 267 provides a ligand contact to heme b.

It belongs to the peroxidase family. Peroxidase/catalase subfamily. Homodimer or homotetramer. The cofactor is heme b. In terms of processing, formation of the three residue Trp-Tyr-Met cross-link is important for the catalase, but not the peroxidase activity of the enzyme.

It catalyses the reaction H2O2 + AH2 = A + 2 H2O. The enzyme catalyses 2 H2O2 = O2 + 2 H2O. In terms of biological role, bifunctional enzyme with both catalase and broad-spectrum peroxidase activity. The chain is Catalase-peroxidase from Shigella sonnei (strain Ss046).